Reading from the N-terminus, the 417-residue chain is UDP-N-acetylglucosamine 1-carboxyvinyltransferase (417 aa).

22–23 contacts phosphoenolpyruvate; sequence KN. Residue Arg93 participates in UDP-N-acetyl-alpha-D-glucosamine binding. The active-site Proton donor is the Cys117. Position 117 is a 2-(S-cysteinyl)pyruvic acid O-phosphothioketal (Cys117). Residues 122-126, Asp304, and Ile326 each bind UDP-N-acetyl-alpha-D-glucosamine; that span reads RPVDQ.

It belongs to the EPSP synthase family. MurA subfamily.

It localises to the cytoplasm. The catalysed reaction is phosphoenolpyruvate + UDP-N-acetyl-alpha-D-glucosamine = UDP-N-acetyl-3-O-(1-carboxyvinyl)-alpha-D-glucosamine + phosphate. The protein operates within cell wall biogenesis; peptidoglycan biosynthesis. Cell wall formation. Adds enolpyruvyl to UDP-N-acetylglucosamine. This Neisseria meningitidis serogroup A / serotype 4A (strain DSM 15465 / Z2491) protein is UDP-N-acetylglucosamine 1-carboxyvinyltransferase.